We begin with the raw amino-acid sequence, 118 residues long: Putative membrane protein insertion efficiency factor (118 aa).

This sequence belongs to the UPF0161 family.

Its subcellular location is the cell inner membrane. Could be involved in insertion of integral membrane proteins into the membrane. This is Putative membrane protein insertion efficiency factor from Helicobacter pylori (strain HPAG1).